A 102-amino-acid polypeptide reads, in one-letter code: NADH-quinone oxidoreductase subunit K (102 aa).

3 consecutive transmembrane segments (helical) span residues 5-25, 30-50, and 62-82; these read LGHYLAVAAMLFTLGILGIFL, IIVILMSVELILLAVNINLVA, and VFALLVLTVAAAEAAIGLAVL.

This sequence belongs to the complex I subunit 4L family. As to quaternary structure, NDH-1 is composed of 14 different subunits. Subunits NuoA, H, J, K, L, M, N constitute the membrane sector of the complex.

Its subcellular location is the cell inner membrane. It catalyses the reaction a quinone + NADH + 5 H(+)(in) = a quinol + NAD(+) + 4 H(+)(out). Its function is as follows. NDH-1 shuttles electrons from NADH, via FMN and iron-sulfur (Fe-S) centers, to quinones in the respiratory chain. The immediate electron acceptor for the enzyme in this species is believed to be ubiquinone. Couples the redox reaction to proton translocation (for every two electrons transferred, four hydrogen ions are translocated across the cytoplasmic membrane), and thus conserves the redox energy in a proton gradient. The polypeptide is NADH-quinone oxidoreductase subunit K (Bradyrhizobium sp. (strain BTAi1 / ATCC BAA-1182)).